A 574-amino-acid chain; its full sequence is Polyamine aminopropyltransferase (574 aa).

The next 7 membrane-spanning stretches (helical) occupy residues 22–42 (VLLLGIMAVLAGCGLIYEYLL), 55–75 (AAIYTMIGLMIVSMGLGAFAA), 90–110 (LTVALCGSLAILITAAVIGFG), 144–164 (LPYFWGVLLGLMIGMEIPLIA), 188–208 (IGAGIGAAIWVGFMLAIDIQL), 209–229 (AAALTASFNLLAGFVFIWRFW), and 237–257 (LLLAAHLVVTGVLLLLAIQGP). Residues 254 to 510 (IQGPSWEQQF…ATLDGKDAQH (257 aa)) form a spermidine synthase region. A PABS domain is found at 257–505 (PSWEQQFNNL…WGWSIATLDG (249 aa)). Gln-281 lines the S-methyl-5'-thioadenosine pocket. 2 residues coordinate spermidine: His-317 and Asp-341. S-methyl-5'-thioadenosine-binding positions include Asp-360 and 403 to 404 (DA). The active-site Proton acceptor is Asp-424.

It belongs to the spermidine/spermine synthase family. As to quaternary structure, homodimer or homotetramer.

The protein resides in the cell membrane. It carries out the reaction S-adenosyl 3-(methylsulfanyl)propylamine + putrescine = S-methyl-5'-thioadenosine + spermidine + H(+). It functions in the pathway amine and polyamine biosynthesis; spermidine biosynthesis; spermidine from putrescine: step 1/1. Functionally, catalyzes the irreversible transfer of a propylamine group from the amino donor S-adenosylmethioninamine (decarboxy-AdoMet) to putrescine (1,4-diaminobutane) to yield spermidine. The sequence is that of Polyamine aminopropyltransferase from Shewanella oneidensis (strain ATCC 700550 / JCM 31522 / CIP 106686 / LMG 19005 / NCIMB 14063 / MR-1).